The sequence spans 299 residues: Acetylglutamate kinase (299 aa).

Substrate-binding positions include 72–73, R94, and N196; that span reads GG.

This sequence belongs to the acetylglutamate kinase family. ArgB subfamily.

Its subcellular location is the cytoplasm. The catalysed reaction is N-acetyl-L-glutamate + ATP = N-acetyl-L-glutamyl 5-phosphate + ADP. It functions in the pathway amino-acid biosynthesis; L-arginine biosynthesis; N(2)-acetyl-L-ornithine from L-glutamate: step 2/4. Catalyzes the ATP-dependent phosphorylation of N-acetyl-L-glutamate. The sequence is that of Acetylglutamate kinase from Burkholderia mallei (strain NCTC 10247).